The sequence spans 141 residues: Small ribosomal subunit protein uS8c (141 aa).

The protein belongs to the universal ribosomal protein uS8 family. Part of the 30S ribosomal subunit.

It is found in the plastid. The protein localises to the chloroplast. In terms of biological role, one of the primary rRNA binding proteins, it binds directly to 16S rRNA central domain where it helps coordinate assembly of the platform of the 30S subunit. This Pleurastrum terricola (Filamentous green alga) protein is Small ribosomal subunit protein uS8c (rps8).